The chain runs to 678 residues: UvrABC system protein C (678 aa).

Positions 1–13 (MKKNISYGKHKTF) are enriched in basic residues. The interval 1–25 (MKKNISYGKHKTFPSKLNGLEKQHS) is disordered. The region spanning 69 to 147 (HKPGVYRMFD…IKRLHPRFNV (79 aa)) is the GIY-YIG domain. The 36-residue stretch at 257–292 (QSVKNDMIQAMHKAAEDLDFEQAAVYRDRLSALSHI) folds into the UVR domain.

It belongs to the UvrC family. Interacts with UvrB in an incision complex.

Its subcellular location is the cytoplasm. Functionally, the UvrABC repair system catalyzes the recognition and processing of DNA lesions. UvrC both incises the 5' and 3' sides of the lesion. The N-terminal half is responsible for the 3' incision and the C-terminal half is responsible for the 5' incision. This Bartonella quintana (strain Toulouse) (Rochalimaea quintana) protein is UvrABC system protein C.